A 467-amino-acid polypeptide reads, in one-letter code: UDP-N-acetylmuramate--L-alanine ligase (467 aa).

112 to 118 is an ATP binding site; the sequence is GTHGKTT.

This sequence belongs to the MurCDEF family.

It is found in the cytoplasm. The catalysed reaction is UDP-N-acetyl-alpha-D-muramate + L-alanine + ATP = UDP-N-acetyl-alpha-D-muramoyl-L-alanine + ADP + phosphate + H(+). Its pathway is cell wall biogenesis; peptidoglycan biosynthesis. Functionally, cell wall formation. The chain is UDP-N-acetylmuramate--L-alanine ligase from Paraburkholderia phytofirmans (strain DSM 17436 / LMG 22146 / PsJN) (Burkholderia phytofirmans).